Consider the following 438-residue polypeptide: MQTQEEASNPLERNIELSVSREKVEAEVGQRLKRLAPKIKIQGFRPGKVPMKIVAQQYGHQIEHEVLGELLQQQFSESINRENYRIAGVPNFESRNPGTDNSNYEFRATFEIYPNIELGDLNSITINKPVLQIGDVEIQKTLEVLRKQRTNYESVDRPAQTGDRVNINYQGSLDGKNFAGGQADNYSVILGNGHLLEDFEASILGMSTGQEKTFDMTFPEDYSGKEVAGKKVTFTITLNKVEAPKLPDVDGEFAKSLGIEDGNVEKMQSEIKANLQRETTQRIRVKLKEQVMQSLLDKISVDIPKILVQQEIDRLIEEVQDTRTARGFPKASNLQRDTFLERAERRVRLGLILSRLIETHGLGVKPEQIKSFIEEHAQSYENPEQVIKWHFASPERIKEIEPLVLEDNAVSWILDRANIVDQNVTFDELMGYSHAANT.

The region spanning 162 to 247 (GDRVNINYQG…LNKVEAPKLP (86 aa)) is the PPIase FKBP-type domain.

It belongs to the FKBP-type PPIase family. Tig subfamily.

Its subcellular location is the cytoplasm. The enzyme catalyses [protein]-peptidylproline (omega=180) = [protein]-peptidylproline (omega=0). Involved in protein export. Acts as a chaperone by maintaining the newly synthesized protein in an open conformation. Functions as a peptidyl-prolyl cis-trans isomerase. The sequence is that of Trigger factor from Nitrosomonas eutropha (strain DSM 101675 / C91 / Nm57).